Reading from the N-terminus, the 223-residue chain is Ribose-5-phosphate isomerase A (223 aa).

Substrate-binding positions include 32–35, 85–88, and 98–101; these read TGST, DGAD, and KGGG. Glu-107 acts as the Proton acceptor in catalysis. Lys-125 is a substrate binding site.

The protein belongs to the ribose 5-phosphate isomerase family. Homodimer.

The enzyme catalyses aldehydo-D-ribose 5-phosphate = D-ribulose 5-phosphate. It participates in carbohydrate degradation; pentose phosphate pathway; D-ribose 5-phosphate from D-ribulose 5-phosphate (non-oxidative stage): step 1/1. Catalyzes the reversible conversion of ribose-5-phosphate to ribulose 5-phosphate. In Pseudomonas aeruginosa (strain LESB58), this protein is Ribose-5-phosphate isomerase A.